The primary structure comprises 215 residues: Charged multivesicular body protein 5 (215 aa).

Residues 29–81 (QMDEKINGLNQELLAYDKQIKATRPGPAQNAIKQKAIRVLQQKKMYERQRDQM) adopt a coiled-coil conformation. Positions 186 to 215 (TPSVPTTDPHQSSVDEYGLPIGQEASQQVV) are disordered. A compositionally biased stretch (polar residues) spans 188–199 (SVPTTDPHQSSV).

Belongs to the SNF7 family. As to quaternary structure, probable peripherally associated component of the endosomal sorting required for transport complex III (ESCRT-III).

It localises to the endosome membrane. Functionally, probable peripherally associated component of the endosomal sorting required for transport complex III (ESCRT-III) which is involved in multivesicular bodies (MVBs) formation and sorting of endosomal cargo proteins into MVBs. MVBs contain intraluminal vesicles (ILVs) that are generated by invagination and scission from the limiting membrane of the endosome and are delivered to lysosomes enabling degradation of membrane proteins. This is Charged multivesicular body protein 5 (chmp5) from Dictyostelium discoideum (Social amoeba).